The following is a 190-amino-acid chain: Hypoxanthine/guanine phosphoribosyltransferase (190 aa).

It belongs to the purine/pyrimidine phosphoribosyltransferase family. Archaeal HPRT subfamily. In terms of assembly, homodimer.

It localises to the cytoplasm. It carries out the reaction IMP + diphosphate = hypoxanthine + 5-phospho-alpha-D-ribose 1-diphosphate. It catalyses the reaction GMP + diphosphate = guanine + 5-phospho-alpha-D-ribose 1-diphosphate. The protein operates within purine metabolism; IMP biosynthesis via salvage pathway; IMP from hypoxanthine: step 1/1. Catalyzes a salvage reaction resulting in the formation of IMP that is energically less costly than de novo synthesis. In Methanosarcina barkeri (strain Fusaro / DSM 804), this protein is Hypoxanthine/guanine phosphoribosyltransferase.